The primary structure comprises 642 residues: Medium-chain-fatty-acid--[acyl-carrier-protein] ligase TtuA (642 aa).

It belongs to the ATP-dependent AMP-binding enzyme family.

It carries out the reaction a medium-chain fatty acid + holo-[ACP] + ATP = a medium-chain fatty acyl-[ACP] + AMP + diphosphate. The catalysed reaction is a medium-chain fatty acid + ATP + H(+) = a medium-chain fatty acyl-AMP + diphosphate. It catalyses the reaction a medium-chain fatty acyl-AMP + holo-[ACP] = a medium-chain fatty acyl-[ACP] + AMP + H(+). The enzyme catalyses decanoate + holo-[ACP] + ATP = decanoyl-[ACP] + AMP + diphosphate. It carries out the reaction decanoate + ATP + H(+) = decanoyl-AMP + diphosphate. The catalysed reaction is decanoyl-AMP + holo-[ACP] = decanoyl-[ACP] + AMP + H(+). Its function is as follows. Ligase likely involved in the biosynthesis of a polyyne metabolite. Catalyzes the activation of decanoic acid, followed by the loading of the activated decanoic acid onto the acyl carrier protein TtuC. Decanoic acid is the preferred substrate, but it can also use 10-undecenoic acid and lauric acid. Nonanoic acid and 7-octenoic acid are only weakly activated. The polypeptide is Medium-chain-fatty-acid--[acyl-carrier-protein] ligase TtuA (Teredinibacter turnerae (strain ATCC 39867 / T7901)).